A 535-amino-acid polypeptide reads, in one-letter code: EH domain-containing protein 3 (535 aa).

Met-1 is modified (N-acetylmethionine). Residues 55–286 (FDNKPMVLLV…DLFRDIQSLP (232 aa)) enclose the Dynamin-type G domain. The interval 65–72 (GQYSTGKT) is G1 motif. 65–72 (GQYSTGKT) contacts ATP. Residues 91 to 92 (EP) are G2 motif. The tract at residues 153-156 (DTPG) is G3 motif. A coiled-coil region spans residues 198 to 227 (DEFSEVIKALKNHEDKMRVVLNKADQIETQ). A G4 motif region spans residues 219-222 (NKAD). Lys-220 is a binding site for ATP. Ile-243 is a region of interest (G5 motif). An ATP-binding site is contributed by Trp-258. Lys-315 participates in a covalent cross-link: Glycyl lysine isopeptide (Lys-Gly) (interchain with G-Cter in SUMO). 2 positions are modified to phosphoserine: Ser-349 and Ser-456. Residues 444-532 (DKPMYDEIFY…AHLLPPSKRK (89 aa)) enclose the EH domain. Residues 476–511 (LPNSVLGKIWKLADIDKDGMLDDEEFALANHLIKVK) form the EF-hand domain. Ca(2+)-binding residues include Asp-489, Asp-491, Asp-493, Met-495, and Glu-500. A Glycyl lysine isopeptide (Lys-Gly) (interchain with G-Cter in SUMO) cross-link involves residue Lys-511.

This sequence belongs to the TRAFAC class dynamin-like GTPase superfamily. Dynamin/Fzo/YdjA family. EHD subfamily. In terms of assembly, homooligomer. Heterooligomer with EHD1. Heterooligomer with EHD2 and EHD4; ATP-binding is required for heterooligomerization. Interacts with PACSIN1. Interacts with PACSIN2. Interacts (via EH domain) with MICALL1. Interacts (via EH domain) with RAB11FIP2. Interacts with ANK2. Interacts with CACNA1GG and CACNA1H. In terms of tissue distribution, strong expression seen in the kidney, brain and liver. In the kidney, expressed exclusively by glomerular endothelial cells; at protein level. Expressed in skeletal muscle neuromuscular junction perisynaptic region; at protein level.

The protein resides in the recycling endosome membrane. Its subcellular location is the cell membrane. It localises to the cell projection. The protein localises to the cilium membrane. It is found in the cytoplasmic vesicle. Its function is as follows. ATP- and membrane-binding protein that controls membrane reorganization/tubulation upon ATP hydrolysis. In vitro causes tubulation of endocytic membranes. Binding to phosphatidic acid induces its membrane tubulation activity. Plays a role in endocytic transport. Involved in early endosome to recycling endosome compartment (ERC), retrograde early endosome to Golgi, and endosome to plasma membrane (rapid recycling) protein transport. Involved in the regulation of Golgi maintenance and morphology. Involved in the recycling of internalized D1 dopamine receptor. Plays a role in cardiac protein trafficking probably implicating ANK2. Involved in the ventricular membrane targeting of SLC8A1 and CACNA1C and probably the atrial membrane localization of CACNA1GG and CACNA1H implicated in the regulation of atrial myocyte excitability and cardiac conduction. In conjunction with EHD4 may be involved in endocytic trafficking of KDR/VEGFR2 implicated in control of glomerular function. Involved in the rapid recycling of integrin beta-3 implicated in cell adhesion maintenance. Involved in the unidirectional retrograde dendritic transport of endocytosed BACE1 and in efficient sorting of BACE1 to axons implicating a function in neuronal APP processing. Plays a role in the formation of the ciliary vesicle, an early step in cilium biogenesis; possibly sharing redundant functions with Ehd1. The chain is EH domain-containing protein 3 from Mus musculus (Mouse).